The chain runs to 330 residues: GTPase Obg (330 aa).

Residues 1–159 (MHFIDEVKIY…MWIHLSLKLL (159 aa)) enclose the Obg domain. Residues 160–327 (SDVGLVGLPN…IVKLALETIK (168 aa)) enclose the OBG-type G domain. GTP-binding positions include 166-173 (GLPNAGKS), 191-195 (FTTLV), 212-215 (DIPG), 279-282 (NKCD), and 308-310 (STC). 2 residues coordinate Mg(2+): Ser-173 and Thr-193.

It belongs to the TRAFAC class OBG-HflX-like GTPase superfamily. OBG GTPase family. In terms of assembly, monomer. Mg(2+) serves as cofactor.

Its subcellular location is the cytoplasm. An essential GTPase which binds GTP, GDP and possibly (p)ppGpp with moderate affinity, with high nucleotide exchange rates and a fairly low GTP hydrolysis rate. Plays a role in control of the cell cycle, stress response, ribosome biogenesis and in those bacteria that undergo differentiation, in morphogenesis control. This chain is GTPase Obg, found in Rickettsia conorii (strain ATCC VR-613 / Malish 7).